A 505-amino-acid chain; its full sequence is MKKYKITFIVLLLTLVGCSDLEENPVGILAPESFFKTTADLQAAINGSYASMSTESFWGRKLTLTLLLRGDLADIGDQGTSGRRKEVNNFTMGDDNGMVSAFWPQAYAIIGTANQAISNAGLINDDENKVNAVAAQAYFCRAFTYYHLVRLFGDIPYIDFAVSDASEIDAISKTPENEVYEGIIADLQYAKEWLPDTQFSRALPSKATAAAYLASVYLTRGDFQKAAEEAQFVINNEARFDLRLEPDFQNLFDANQTAGLKEPLFTIDYMGQISSSGYGQDYVASVTGIRGDATHEYGEGWSVAVPSLKVYQDWDAKDYRRAVSLDTTATSKSGEVYPYTQFEEYSDLAVNRPHIAKYYRYAGLAGNNGRESSTNYIPMRYAEVLLIAAEALNEISAGSSEAVSYVNRLRERARLGSGSMHPLNISEGLLQDELRNIIIEERKIELAFEFKRWYDIKRLKLGNEVFGPNGLEPQPNFDANRDYLLPLPGPELVRNSNLMPNNPGY.

Residues 1–17 form the signal peptide; it reads MKKYKITFIVLLLTLVG. Cysteine 18 is lipidated: N-palmitoyl cysteine. Residue cysteine 18 is the site of S-diacylglycerol cysteine attachment.

It belongs to the SusD family.

It localises to the cell outer membrane. Its function is as follows. Polysaccharide-binding protein probably involved in ulvan degradation. Ulvan is the main polysaccharide component of the Ulvales (green seaweed) cell wall. It is composed of disaccharide building blocks comprising 3-sulfated rhamnose (Rha3S) linked to D-glucuronic acid (GlcA), L-iduronic acid (IduA), or D-xylose (Xyl). The SusD-like protein may mediate ulvan oligomer-binding before transport in the periplasm for further degradation. This is SusD-like protein P2 from Formosa agariphila (strain DSM 15362 / KCTC 12365 / LMG 23005 / KMM 3901 / M-2Alg 35-1).